The following is a 315-amino-acid chain: DNA-directed RNA polymerase subunit alpha (315 aa).

The tract at residues methionine 1–threonine 228 is alpha N-terminal domain (alpha-NTD). The interval lysine 245 to glutamate 315 is alpha C-terminal domain (alpha-CTD).

The protein belongs to the RNA polymerase alpha chain family. Homodimer. The RNAP catalytic core consists of 2 alpha, 1 beta, 1 beta' and 1 omega subunit. When a sigma factor is associated with the core the holoenzyme is formed, which can initiate transcription.

It carries out the reaction RNA(n) + a ribonucleoside 5'-triphosphate = RNA(n+1) + diphosphate. In terms of biological role, DNA-dependent RNA polymerase catalyzes the transcription of DNA into RNA using the four ribonucleoside triphosphates as substrates. This is DNA-directed RNA polymerase subunit alpha from Desulforudis audaxviator (strain MP104C).